Consider the following 231-residue polypeptide: Ion-translocating oxidoreductase complex subunit E (231 aa).

Helical transmembrane passes span alanine 18–alanine 38, leucine 39–leucine 59, threonine 63–valine 83, leucine 86–valine 106, alanine 125–leucine 145, and proline 182–glycine 202.

This sequence belongs to the NqrDE/RnfAE family. As to quaternary structure, the complex is composed of six subunits: RsxA, RsxB, RsxC, RsxD, RsxE and RsxG.

It localises to the cell inner membrane. Its function is as follows. Part of a membrane-bound complex that couples electron transfer with translocation of ions across the membrane. Required to maintain the reduced state of SoxR. This Escherichia coli O127:H6 (strain E2348/69 / EPEC) protein is Ion-translocating oxidoreductase complex subunit E.